The following is a 339-amino-acid chain: Transcription initiation factor IIB (339 aa).

The TFIIB-type zinc-finger motif lies at 39–70; it reads EELICPVCGSKSIIKDYERAEIVCEMCGCVLQ. 4 residues coordinate Zn(2+): Cys-43, Cys-46, Cys-62, and Cys-65. 2 tandem repeats follow at residues 156–239 and 250–331.

This sequence belongs to the TFIIB family.

Stabilizes TBP binding to an archaeal box-A promoter. Also responsible for recruiting RNA polymerase II to the pre-initiation complex (DNA-TBP-TFIIB). This chain is Transcription initiation factor IIB, found in Methanococcus maripaludis (strain DSM 14266 / JCM 13030 / NBRC 101832 / S2 / LL).